Reading from the N-terminus, the 232-residue chain is Large ribosomal subunit protein uL1 (232 aa).

It belongs to the universal ribosomal protein uL1 family. In terms of assembly, part of the 50S ribosomal subunit.

Functionally, binds directly to 23S rRNA. The L1 stalk is quite mobile in the ribosome, and is involved in E site tRNA release. In terms of biological role, protein L1 is also a translational repressor protein, it controls the translation of the L11 operon by binding to its mRNA. This chain is Large ribosomal subunit protein uL1, found in Coxiella burnetii (strain CbuK_Q154) (Coxiella burnetii (strain Q154)).